The following is a 447-amino-acid chain: Argininosuccinate synthase (447 aa).

Residues 12-20 and Ala39 contribute to the ATP site; that span reads AYSGGLDTS. Residues Tyr92 and Ser97 each coordinate L-citrulline. Gly122 provides a ligand contact to ATP. The L-aspartate site is built by Thr124, Asn128, and Asp129. Asn128 provides a ligand contact to L-citrulline. Positions 132, 182, 191, 267, and 279 each coordinate L-citrulline.

Belongs to the argininosuccinate synthase family. Type 1 subfamily. As to quaternary structure, homotetramer.

It localises to the cytoplasm. The catalysed reaction is L-citrulline + L-aspartate + ATP = 2-(N(omega)-L-arginino)succinate + AMP + diphosphate + H(+). It participates in amino-acid biosynthesis; L-arginine biosynthesis; L-arginine from L-ornithine and carbamoyl phosphate: step 2/3. The sequence is that of Argininosuccinate synthase from Sulfurovum sp. (strain NBC37-1).